A 380-amino-acid chain; its full sequence is 3-dehydroquinate synthase (380 aa).

Belongs to the archaeal-type DHQ synthase family.

It catalyses the reaction 2-amino-2,3,7-trideoxy-D-lyxo-hept-6-ulosonate + NAD(+) + H2O = 3-dehydroquinate + NH4(+) + NADH + H(+). Its function is as follows. Catalyzes the oxidative deamination and cyclization of 2-amino-3,7-dideoxy-D-threo-hept-6-ulosonic acid (ADH) to yield 3-dehydroquinate (DHQ), which is fed into the canonical shikimic pathway of aromatic amino acid biosynthesis. The polypeptide is 3-dehydroquinate synthase (Methanosarcina mazei (strain ATCC BAA-159 / DSM 3647 / Goe1 / Go1 / JCM 11833 / OCM 88) (Methanosarcina frisia)).